Consider the following 63-residue polypeptide: Large ribosomal subunit protein uL29 (63 aa).

The protein belongs to the universal ribosomal protein uL29 family.

The sequence is that of Large ribosomal subunit protein uL29 from Haemophilus ducreyi (strain 35000HP / ATCC 700724).